The sequence spans 177 residues: Peptide methionine sulfoxide reductase MsrA (177 aa).

Cys12 is a catalytic residue.

This sequence belongs to the MsrA Met sulfoxide reductase family.

The enzyme catalyses L-methionyl-[protein] + [thioredoxin]-disulfide + H2O = L-methionyl-(S)-S-oxide-[protein] + [thioredoxin]-dithiol. It carries out the reaction [thioredoxin]-disulfide + L-methionine + H2O = L-methionine (S)-S-oxide + [thioredoxin]-dithiol. In terms of biological role, has an important function as a repair enzyme for proteins that have been inactivated by oxidation. Catalyzes the reversible oxidation-reduction of methionine sulfoxide in proteins to methionine. The protein is Peptide methionine sulfoxide reductase MsrA of Halobacterium salinarum (strain ATCC 29341 / DSM 671 / R1).